A 158-amino-acid chain; its full sequence is Crossover junction endodeoxyribonuclease RuvC (158 aa).

Catalysis depends on residues Asp7, Glu66, and Asp139. Residues Asp7, Glu66, and Asp139 each contribute to the Mg(2+) site.

The protein belongs to the RuvC family. Homodimer which binds Holliday junction (HJ) DNA. The HJ becomes 2-fold symmetrical on binding to RuvC with unstacked arms; it has a different conformation from HJ DNA in complex with RuvA. In the full resolvosome a probable DNA-RuvA(4)-RuvB(12)-RuvC(2) complex forms which resolves the HJ. Mg(2+) serves as cofactor.

It is found in the cytoplasm. The enzyme catalyses Endonucleolytic cleavage at a junction such as a reciprocal single-stranded crossover between two homologous DNA duplexes (Holliday junction).. In terms of biological role, the RuvA-RuvB-RuvC complex processes Holliday junction (HJ) DNA during genetic recombination and DNA repair. Endonuclease that resolves HJ intermediates. Cleaves cruciform DNA by making single-stranded nicks across the HJ at symmetrical positions within the homologous arms, yielding a 5'-phosphate and a 3'-hydroxyl group; requires a central core of homology in the junction. The consensus cleavage sequence is 5'-(A/T)TT(C/G)-3'. Cleavage occurs on the 3'-side of the TT dinucleotide at the point of strand exchange. HJ branch migration catalyzed by RuvA-RuvB allows RuvC to scan DNA until it finds its consensus sequence, where it cleaves and resolves the cruciform DNA. The sequence is that of Crossover junction endodeoxyribonuclease RuvC from Carboxydothermus hydrogenoformans (strain ATCC BAA-161 / DSM 6008 / Z-2901).